The primary structure comprises 364 residues: Histidinol-phosphate aminotransferase (364 aa).

K226 carries the N6-(pyridoxal phosphate)lysine modification.

The protein belongs to the class-II pyridoxal-phosphate-dependent aminotransferase family. Histidinol-phosphate aminotransferase subfamily. In terms of assembly, homodimer. Pyridoxal 5'-phosphate is required as a cofactor.

It catalyses the reaction L-histidinol phosphate + 2-oxoglutarate = 3-(imidazol-4-yl)-2-oxopropyl phosphate + L-glutamate. It functions in the pathway amino-acid biosynthesis; L-histidine biosynthesis; L-histidine from 5-phospho-alpha-D-ribose 1-diphosphate: step 7/9. In Campylobacter jejuni (strain RM1221), this protein is Histidinol-phosphate aminotransferase.